The following is a 642-amino-acid chain: Threonine--tRNA ligase (642 aa).

In terms of domain architecture, TGS spans 1–61 (MPIITLPDGS…EHDASLEIIT (61 aa)). Positions 244–535 (DHRKIGKQLD…LIEEYAGFFP (292 aa)) are catalytic. Cysteine 335, histidine 386, and histidine 512 together coordinate Zn(2+).

This sequence belongs to the class-II aminoacyl-tRNA synthetase family. In terms of assembly, homodimer. It depends on Zn(2+) as a cofactor.

Its subcellular location is the cytoplasm. It carries out the reaction tRNA(Thr) + L-threonine + ATP = L-threonyl-tRNA(Thr) + AMP + diphosphate + H(+). In terms of biological role, catalyzes the attachment of threonine to tRNA(Thr) in a two-step reaction: L-threonine is first activated by ATP to form Thr-AMP and then transferred to the acceptor end of tRNA(Thr). Also edits incorrectly charged L-seryl-tRNA(Thr). The protein is Threonine--tRNA ligase of Vibrio cholerae serotype O1 (strain ATCC 39541 / Classical Ogawa 395 / O395).